The chain runs to 200 residues: ADP-ribosylation factor-like protein 4A (200 aa).

The N-myristoyl glycine moiety is linked to residue glycine 2. GTP contacts are provided by residues 27–34 (GLDCAGKT), 75–79 (DVGGQ), and 134–137 (NKQD).

It belongs to the small GTPase superfamily. Arf family. As to quaternary structure, interacts with CYTH2. Interacts with KPNA2; the interaction is direct. Does not interact with ARL4A. In terms of processing, myristoylated.

The protein resides in the cell membrane. It localises to the cytoplasm. Its subcellular location is the nucleus. It is found in the nucleolus. Its function is as follows. Small GTP-binding protein which cycles between an inactive GDP-bound and an active GTP-bound form, and the rate of cycling is regulated by guanine nucleotide exchange factors (GEF) and GTPase-activating proteins (GAP). GTP-binding protein that does not act as an allosteric activator of the cholera toxin catalytic subunit. Recruits CYTH1, CYTH2, CYTH3 and CYTH4 to the plasma membrane in GDP-bound form. The protein is ADP-ribosylation factor-like protein 4A (ARL4A) of Homo sapiens (Human).